The primary structure comprises 215 residues: Fanconi anemia core complex-associated protein 24 (215 aa).

As to quaternary structure, belongs to the multisubunit FA complex composed of FANCA, FANCB, FANCC, FANCE, FANCF, FANCG, FANCL/PHF9, FANCM and FAAP24. Interacts with FANCM.

The protein resides in the nucleus. Plays a role in DNA repair through recruitment of the FA core complex to damaged DNA. Regulates FANCD2 monoubiquitination upon DNA damage. Induces chromosomal instability as well as hypersensitivity to DNA cross-linking agents, when repressed. Targets FANCM/FAAP24 complex to the DNA, preferentially to single strand DNA. This Bos taurus (Bovine) protein is Fanconi anemia core complex-associated protein 24.